The following is a 238-amino-acid chain: MLTRKQQELLLFIHERMKESGVPPSFDEMKDALDLASKSGIHRLITALEERGFIRRLPNRARALEVIKLPEAYAGASQVRRGFSPSVIEGSLGKPAAPPPAPKPAPPAEAASVAVPVMGRIAAGVPISAIQNNMHDISVPVEMIGSGEHYALEIKGDSMIEAGILDGDTVIIRNGSTASPGDIVVALIDDEEATLKRFRRKGASIALEAANPAYETRIFGPDRVKIQGRLVGLIRRYH.

Positions 26-46 (FDEMKDALDLASKSGIHRLIT) form a DNA-binding region, H-T-H motif. Catalysis depends on for autocatalytic cleavage activity residues serine 158 and lysine 196.

The protein belongs to the peptidase S24 family. As to quaternary structure, homodimer.

It catalyses the reaction Hydrolysis of Ala-|-Gly bond in repressor LexA.. Represses a number of genes involved in the response to DNA damage (SOS response), including recA and lexA. In the presence of single-stranded DNA, RecA interacts with LexA causing an autocatalytic cleavage which disrupts the DNA-binding part of LexA, leading to derepression of the SOS regulon and eventually DNA repair. This chain is LexA repressor, found in Rhizobium meliloti (strain 1021) (Ensifer meliloti).